We begin with the raw amino-acid sequence, 733 residues long: Phosphoribosylformylglycinamidine synthase subunit PurL (733 aa).

H42 is a catalytic residue. Y45 and K84 together coordinate ATP. Mg(2+) is bound at residue E86. Residues 87–90 (SHNH) and R109 contribute to the substrate site. The Proton acceptor role is filled by H88. D110 is a Mg(2+) binding site. Q233 lines the substrate pocket. D261 contacts Mg(2+). Position 305-307 (305-307 (ESQ)) interacts with substrate. ATP-binding residues include D489 and G526. Residue N527 participates in Mg(2+) binding. Substrate is bound at residue S529.

It belongs to the FGAMS family. In terms of assembly, monomer. Part of the FGAM synthase complex composed of 1 PurL, 1 PurQ and 2 PurS subunits.

It is found in the cytoplasm. The catalysed reaction is N(2)-formyl-N(1)-(5-phospho-beta-D-ribosyl)glycinamide + L-glutamine + ATP + H2O = 2-formamido-N(1)-(5-O-phospho-beta-D-ribosyl)acetamidine + L-glutamate + ADP + phosphate + H(+). The protein operates within purine metabolism; IMP biosynthesis via de novo pathway; 5-amino-1-(5-phospho-D-ribosyl)imidazole from N(2)-formyl-N(1)-(5-phospho-D-ribosyl)glycinamide: step 1/2. In terms of biological role, part of the phosphoribosylformylglycinamidine synthase complex involved in the purines biosynthetic pathway. Catalyzes the ATP-dependent conversion of formylglycinamide ribonucleotide (FGAR) and glutamine to yield formylglycinamidine ribonucleotide (FGAM) and glutamate. The FGAM synthase complex is composed of three subunits. PurQ produces an ammonia molecule by converting glutamine to glutamate. PurL transfers the ammonia molecule to FGAR to form FGAM in an ATP-dependent manner. PurS interacts with PurQ and PurL and is thought to assist in the transfer of the ammonia molecule from PurQ to PurL. The protein is Phosphoribosylformylglycinamidine synthase subunit PurL of Moorella thermoacetica (strain ATCC 39073 / JCM 9320).